Consider the following 445-residue polypeptide: Neuropeptide Y receptor type 5 (445 aa).

Residues 1-42 (MDLELDEYYNKTLATENNTAATRNSDFPVWDDYKSSVDDLQY) are Extracellular-facing. N-linked (GlcNAc...) asparagine glycosylation is found at Asn-10 and Asn-17. Residues 43-63 (FLIGLYTFVSLLGFMGNLLIL) traverse the membrane as a helical segment. Residues 64-77 (MALMKKRNQKTTVN) are Cytoplasmic-facing. Residues 78-98 (FLIGNLAFSDILVVLFCSPFT) form a helical membrane-spanning segment. Residues 99–117 (LTSVLLDQWMFGKVMCHIM) lie on the Extracellular side of the membrane. Cys-114 and Cys-198 are oxidised to a cystine. The helical transmembrane segment at 118-138 (PFLQCVSVLVSTLILISIAIV) threads the bilayer. The Cytoplasmic portion of the chain corresponds to 139–156 (RYHMIKHPISNNLTANHG). A helical transmembrane segment spans residues 157-177 (YFLIATVWTLGFAICSPLPVF). Topologically, residues 178-208 (HSLVELQETFGSALLSSRYLCVESWPSDSYR) are extracellular. A helical transmembrane segment spans residues 209–229 (IAFTISLLLVQYILPLVCLTV). Topologically, residues 230–369 (SHTSVCRSIS…KKRSRSVFYR (140 aa)) are cytoplasmic. The chain crosses the membrane as a helical span at residues 370 to 390 (LTILILVFAVSWMPLHLFHVV). Residues 391-407 (TDFNDNLISNRHFKLVY) lie on the Extracellular side of the membrane. The helical transmembrane segment at 408 to 428 (CICHLLGMMSCCLNPILYGFL) threads the bilayer. The Cytoplasmic segment spans residues 429 to 445 (NNGIKADLVSLIHCLHM). Cys-442 carries the S-palmitoyl cysteine lipid modification.

The protein belongs to the G-protein coupled receptor 1 family. As to expression, brain; hypothalamus.

Its subcellular location is the cell membrane. Its function is as follows. Receptor for neuropeptide Y and peptide YY. The activity of this receptor is mediated by G proteins that inhibit adenylate cyclase activity. Seems to be associated with food intake. Could be involved in feeding disorders. The polypeptide is Neuropeptide Y receptor type 5 (NPY5R) (Homo sapiens (Human)).